A 284-amino-acid polypeptide reads, in one-letter code: Bifunctional protein FolD (284 aa).

NADP(+)-binding positions include 165–167, Thr-192, and Val-233; that span reads GRG.

Belongs to the tetrahydrofolate dehydrogenase/cyclohydrolase family. Homodimer.

It catalyses the reaction (6R)-5,10-methylene-5,6,7,8-tetrahydrofolate + NADP(+) = (6R)-5,10-methenyltetrahydrofolate + NADPH. It carries out the reaction (6R)-5,10-methenyltetrahydrofolate + H2O = (6R)-10-formyltetrahydrofolate + H(+). Its pathway is one-carbon metabolism; tetrahydrofolate interconversion. Its function is as follows. Catalyzes the oxidation of 5,10-methylenetetrahydrofolate to 5,10-methenyltetrahydrofolate and then the hydrolysis of 5,10-methenyltetrahydrofolate to 10-formyltetrahydrofolate. In Corynebacterium efficiens (strain DSM 44549 / YS-314 / AJ 12310 / JCM 11189 / NBRC 100395), this protein is Bifunctional protein FolD.